We begin with the raw amino-acid sequence, 452 residues long: Serine incorporator 2 (452 aa).

Transmembrane regions (helical) follow at residues Leu-5–Leu-25, Phe-41–Val-61, Ala-96–Val-116, Gly-131–Pro-151, Ile-158–Leu-178, Leu-205–Val-225, Gly-236–Leu-256, Ser-266–Leu-286, Trp-319–Leu-339, Phe-387–Tyr-407, and Ile-426–Leu-446.

It belongs to the TDE1 family.

It localises to the cell membrane. The enzyme catalyses a 1,2-diacyl-sn-glycero-3-phospho-L-serine(in) = a 1,2-diacyl-sn-glycero-3-phospho-L-serine(out). The catalysed reaction is a 1,2-diacyl-sn-glycero-3-phosphocholine(in) = a 1,2-diacyl-sn-glycero-3-phosphocholine(out). It catalyses the reaction a 1,2-diacyl-sn-glycero-3-phosphoethanolamine(in) = a 1,2-diacyl-sn-glycero-3-phosphoethanolamine(out). Functionally, non-ATP-dependent, non-specific lipid transporter for phosphatidylserine, phosphatidylcholine, and phosphatidylethanolamine. Functions as a scramblase that flips lipids in both directions across the membrane. In contrast to SERINC3 and SERINC5, has no effect on gammaretrovirus particles infectivity. In Bos taurus (Bovine), this protein is Serine incorporator 2 (SERINC2).